The chain runs to 489 residues: Long chain base biosynthesis protein 2b (489 aa).

Residues 2 to 22 form a helical membrane-spanning segment; it reads ITIPYLTAVSTYFSYGLLFAF. N6-(pyridoxal phosphate)lysine is present on lysine 311.

The protein belongs to the class-II pyridoxal-phosphate-dependent aminotransferase family. Heterodimer with LCB1. Component of the serine palmitoyltransferase (SPT) complex, composed of LCB1 and LCB2 (LCB2a or LCB2b). It depends on pyridoxal 5'-phosphate as a cofactor. In terms of tissue distribution, ubiquitous with the highest expression in flowers.

It is found in the endoplasmic reticulum membrane. The enzyme catalyses L-serine + hexadecanoyl-CoA + H(+) = 3-oxosphinganine + CO2 + CoA. It functions in the pathway lipid metabolism; sphingolipid metabolism. Serine palmitoyltransferase (SPT). The heterodimer formed with LCB1 constitutes the catalytic core. Plays an important role during male gametogenesis and embryogenesis. This is Long chain base biosynthesis protein 2b (LCB2b) from Arabidopsis thaliana (Mouse-ear cress).